The sequence spans 283 residues: Pantothenate synthetase (283 aa).

Residue 30-37 (MGNLHDAH) participates in ATP binding. The active-site Proton donor is His-37. Gln-61 contacts (R)-pantoate. Gln-61 provides a ligand contact to beta-alanine. Residue 149–152 (GVKD) coordinates ATP. A (R)-pantoate-binding site is contributed by Gln-155. Residues Val-178 and 186 to 189 (MSSR) each bind ATP.

It belongs to the pantothenate synthetase family. As to quaternary structure, homodimer.

The protein resides in the cytoplasm. The catalysed reaction is (R)-pantoate + beta-alanine + ATP = (R)-pantothenate + AMP + diphosphate + H(+). Its pathway is cofactor biosynthesis; (R)-pantothenate biosynthesis; (R)-pantothenate from (R)-pantoate and beta-alanine: step 1/1. Catalyzes the condensation of pantoate with beta-alanine in an ATP-dependent reaction via a pantoyl-adenylate intermediate. The sequence is that of Pantothenate synthetase from Cellvibrio japonicus (strain Ueda107) (Pseudomonas fluorescens subsp. cellulosa).